Reading from the N-terminus, the 152-residue chain is Succinate dehydrogenase [ubiquinone] cytochrome b small subunit, mitochondrial (152 aa).

The transit peptide at 1–21 (MATLLRVSSLCRANRASAFKS) directs the protein to the mitochondrion. The Mitochondrial matrix portion of the chain corresponds to 22 to 56 (LLIRPVPCLTQDHHMVQTSQIHTSPNHHAGSKAAS). The helical transmembrane segment at 57-78 (MHWTSERALSVALLGLLPAAYL) threads the bilayer. Residues 79 to 83 (YPGAA) lie on the Mitochondrial intermembrane side of the membrane. Residues 84 to 104 (MDYSLAAALTLHGHWGLGQVV) traverse the membrane as a helical segment. H95 provides a ligand contact to heme b. Residues 105–113 (TDYVHGDAK) lie on the Mitochondrial matrix side of the membrane. Y107 lines the a ubiquinone pocket. The chain crosses the membrane as a helical span at residues 114–135 (IKMANTSLFALSALTFAGLCYF). The Mitochondrial intermembrane segment spans residues 136–152 (NYHDVGICKAVSMLWSL).

Belongs to the CybS family. In terms of assembly, component of complex II composed of four subunits: the flavoprotein (FP) SDHA, iron-sulfur protein (IP) SDHB, and a cytochrome b560 composed of SDHC and SDHD.

It localises to the mitochondrion inner membrane. It participates in carbohydrate metabolism; tricarboxylic acid cycle. Its function is as follows. Membrane-anchoring subunit of succinate dehydrogenase (SDH) that is involved in complex II of the mitochondrial electron transport chain and is responsible for transferring electrons from succinate to ubiquinone (coenzyme Q). SDH also oxidizes malate to the non-canonical enol form of oxaloacetate, enol-oxaloacetate. Enol-oxaloacetate, which is a potent inhibitor of the succinate dehydrogenase activity, is further isomerized into keto-oxaloacetate. The polypeptide is Succinate dehydrogenase [ubiquinone] cytochrome b small subunit, mitochondrial (sdhd) (Xenopus tropicalis (Western clawed frog)).